We begin with the raw amino-acid sequence, 370 residues long: Proline-rich protein 5-like (370 aa).

A Phosphoserine modification is found at Ser28. Disordered regions lie at residues 312-346 (LGEE…LDSP) and 351-370 (LEDV…ASLS).

This sequence belongs to the PROTOR family. In terms of assembly, interacts with the mammalian target of rapamycin complex 2 (mTORC2) which contains MTOR, MLST8, PRR5, RICTOR, MAPKAP1 and DEPTOR. Interacts with RFFL. Interacts (via C-terminus) with ZFP36 (via C-terminus); this interaction may accelerate ZFP36-mediated mRNA decay during stress. Interacts with RICTOR. Ubiquitinated. Ubiquitination by RFFL promotes proteasomal degradation of PRR5L thereby modifying the substrate-specific activity of the mTORC2 complex. Ubiquitination by RFFL is stimulated by LPA/lysophosphatidic acid.

Associates with the mTORC2 complex that regulates cellular processes including survival and organization of the cytoskeleton. Regulates the activity of the mTORC2 complex in a substrate-specific manner preventing for instance the specific phosphorylation of PKCs and thereby controlling cell migration. Plays a role in the stimulation of ZFP36-mediated mRNA decay of several ZFP36-associated mRNAs, such as TNF-alpha and GM-CSF, in response to stress. Required for ZFP36 localization to cytoplasmic stress granule (SG) and P-body (PB) in response to stress. This chain is Proline-rich protein 5-like (Prr5l), found in Mus musculus (Mouse).